Consider the following 258-residue polypeptide: Imidazole glycerol phosphate synthase subunit HisF (258 aa).

Residues aspartate 11 and aspartate 130 contribute to the active site.

The protein belongs to the HisA/HisF family. Heterodimer of HisH and HisF.

Its subcellular location is the cytoplasm. The enzyme catalyses 5-[(5-phospho-1-deoxy-D-ribulos-1-ylimino)methylamino]-1-(5-phospho-beta-D-ribosyl)imidazole-4-carboxamide + L-glutamine = D-erythro-1-(imidazol-4-yl)glycerol 3-phosphate + 5-amino-1-(5-phospho-beta-D-ribosyl)imidazole-4-carboxamide + L-glutamate + H(+). The protein operates within amino-acid biosynthesis; L-histidine biosynthesis; L-histidine from 5-phospho-alpha-D-ribose 1-diphosphate: step 5/9. Its function is as follows. IGPS catalyzes the conversion of PRFAR and glutamine to IGP, AICAR and glutamate. The HisF subunit catalyzes the cyclization activity that produces IGP and AICAR from PRFAR using the ammonia provided by the HisH subunit. The protein is Imidazole glycerol phosphate synthase subunit HisF of Escherichia coli O1:K1 / APEC.